The primary structure comprises 652 residues: DNA ligase (652 aa).

NAD(+)-binding positions include 29–33 (DSDYD), 78–79 (SL), and Glu-107. Lys-109 functions as the N6-AMP-lysine intermediate in the catalytic mechanism. Residues Arg-130, Glu-164, Lys-278, and Lys-302 each coordinate NAD(+). Positions 395, 398, 413, and 418 each coordinate Zn(2+). The BRCT domain occupies 577 to 652 (NSDAALFGLT…IEDEDWLRQL (76 aa)).

It belongs to the NAD-dependent DNA ligase family. LigA subfamily. It depends on Mg(2+) as a cofactor. Mn(2+) is required as a cofactor.

The enzyme catalyses NAD(+) + (deoxyribonucleotide)n-3'-hydroxyl + 5'-phospho-(deoxyribonucleotide)m = (deoxyribonucleotide)n+m + AMP + beta-nicotinamide D-nucleotide.. In terms of biological role, DNA ligase that catalyzes the formation of phosphodiester linkages between 5'-phosphoryl and 3'-hydroxyl groups in double-stranded DNA using NAD as a coenzyme and as the energy source for the reaction. It is essential for DNA replication and repair of damaged DNA. In Streptococcus pyogenes serotype M3 (strain ATCC BAA-595 / MGAS315), this protein is DNA ligase.